A 1462-amino-acid polypeptide reads, in one-letter code: Copper-transporting ATPase 2 (1462 aa).

Residues 1-23 (MDPRKNLASVGTMPEQERQVTAK) are disordered. Over 1-655 (MDPRKNLASV…KTEIKQWKKS (655 aa)) the chain is Cytoplasmic. HMA domains follow at residues 68-134 (ATDV…FEAS), 153-219 (AVVK…FEAA), 267-333 (ATLP…PGHF), and 361-427 (RTAV…FEVS). The Cu(+) site is built by cysteine 79, cysteine 82, cysteine 164, cysteine 167, cysteine 278, and cysteine 281. The disordered stretch occupies residues 333–361 (FKVSLPDGVEENEPQSGSSQRHQEQGPGR). Cysteine 372 serves as a coordination point for Cu(+). The segment at 460 to 487 (KMAPDTRGLPTHQGPGHSSETPSSPGAT) is disordered. Polar residues predominate over residues 475 to 487 (GHSSETPSSPGAT). 2 positions are modified to phosphoserine: serine 478 and serine 483. HMA domains lie at 490-556 (QKCF…FEAS) and 566-632 (GDIE…FHAS). Residues cysteine 501, cysteine 504, cysteine 577, and cysteine 580 each coordinate Cu(+). Residues 656–677 (FLCSLVFGIPVMGLMVYMLIPS) traverse the membrane as a helical segment. Topologically, residues 678–699 (STPQETMVLDHNIIPGLSVLNL) are extracellular. The chain crosses the membrane as a helical span at residues 700–719 (IFFILCTFVQFLGGWYFYVQ). At 720-726 (AYKSLRH) the chain is on the cytoplasmic side. Residues 727-747 (RSANMDVLIVLATTIAYAYSL) traverse the membrane as a helical segment. The Extracellular segment spans residues 748-766 (VILVVAVAEKAEKSPVTFF). Residues 767 to 787 (DTPPMLFVFIALGRWLEHVAK) traverse the membrane as a helical segment. The Cytoplasmic segment spans residues 788–921 (SKTSEALAKL…KAPIQQLADR (134 aa)). A helical membrane pass occupies residues 922-944 (FSGYFVPFIIIISTLTLVVWIVI). Topologically, residues 945–974 (GFVDFGVVQKYFPSPSKHISQTEVIIRFAF) are extracellular. The chain crosses the membrane as a helical span at residues 975 to 996 (QTSITVLCIACPCSLGLATPTA). The Cytoplasmic segment spans residues 997 to 1319 (VMVGTGVAAQ…LSKRTVRRIR (323 aa)). Aspartate 1029 functions as the 4-aspartylphosphate intermediate in the catalytic mechanism. Aspartate 1264 and aspartate 1268 together coordinate Mg(2+). The chain crosses the membrane as a helical span at residues 1320–1337 (VNLVLALIYNMVGIPIAA). The Extracellular portion of the chain corresponds to 1338–1348 (GVFMPIGIVLQ). Residues 1349 to 1368 (PWMGSAAMAASSVSVVLSSL) traverse the membrane as a helical segment. Topologically, residues 1369-1462 (QLKCYRKPDL…LSDRDEEQCI (94 aa)) are cytoplasmic. Phosphoserine is present on residues serine 1395 and serine 1454.

This sequence belongs to the cation transport ATPase (P-type) (TC 3.A.3) family. Type IB subfamily. Monomer. Interacts with COMMD1/MURR1. Interacts with DCTN4, in a copper-dependent manner. Interacts with ATOX1. Interacts (via C-terminus) with ZBTB16/PLZF. As to expression, detected in liver and kidney.

The protein localises to the golgi apparatus. It is found in the trans-Golgi network membrane. Its subcellular location is the late endosome. It carries out the reaction Cu(+)(in) + ATP + H2O = Cu(+)(out) + ADP + phosphate + H(+). Copper ion transmembrane transporter involved in the export of copper out of the cells, such as the efflux of hepatic copper into the bile. In Mus musculus (Mouse), this protein is Copper-transporting ATPase 2 (Atp7b).